The primary structure comprises 172 residues: Large ribosomal subunit protein uL10 (172 aa).

Belongs to the universal ribosomal protein uL10 family. As to quaternary structure, part of the ribosomal stalk of the 50S ribosomal subunit. The N-terminus interacts with L11 and the large rRNA to form the base of the stalk. The C-terminus forms an elongated spine to which L12 dimers bind in a sequential fashion forming a multimeric L10(L12)X complex.

Its function is as follows. Forms part of the ribosomal stalk, playing a central role in the interaction of the ribosome with GTP-bound translation factors. The sequence is that of Large ribosomal subunit protein uL10 from Brucella anthropi (strain ATCC 49188 / DSM 6882 / CCUG 24695 / JCM 21032 / LMG 3331 / NBRC 15819 / NCTC 12168 / Alc 37) (Ochrobactrum anthropi).